The following is an 88-amino-acid chain: Sec-independent protein translocase protein TatA (88 aa).

A helical membrane pass occupies residues 1–21 (MGGISIWQLLIIALIVVLLFG). The disordered stretch occupies residues 43 to 88 (MSSEEDKKALEDAEAAKPVQTAQTVQSAQPTQQATEKKPESNKEQA). A compositionally biased stretch (basic and acidic residues) spans 46–57 (EEDKKALEDAEA). The segment covering 62–76 (QTAQTVQSAQPTQQA) has biased composition (polar residues). Basic and acidic residues predominate over residues 77–88 (TEKKPESNKEQA).

This sequence belongs to the TatA/E family. In terms of assembly, the Tat system comprises two distinct complexes: a TatABC complex, containing multiple copies of TatA, TatB and TatC subunits, and a separate TatA complex, containing only TatA subunits. Substrates initially bind to the TatABC complex, which probably triggers association of the separate TatA complex to form the active translocon.

The protein resides in the cell inner membrane. Part of the twin-arginine translocation (Tat) system that transports large folded proteins containing a characteristic twin-arginine motif in their signal peptide across membranes. TatA could form the protein-conducting channel of the Tat system. The sequence is that of Sec-independent protein translocase protein TatA from Shewanella oneidensis (strain ATCC 700550 / JCM 31522 / CIP 106686 / LMG 19005 / NCIMB 14063 / MR-1).